Consider the following 322-residue polypeptide: Cytochrome f (322 aa).

The N-terminal stretch at 1-35 (MQTRNTFSWTWIREEITRSISVSLMIYIITWSSIS) is a signal peptide. Residues Tyr38, Cys58, Cys61, and His62 each coordinate heme. The helical transmembrane segment at 288–308 (VQGLLFFLGSVVLAQIFLVLK) threads the bilayer.

This sequence belongs to the cytochrome f family. In terms of assembly, the 4 large subunits of the cytochrome b6-f complex are cytochrome b6, subunit IV (17 kDa polypeptide, petD), cytochrome f and the Rieske protein, while the 4 small subunits are PetG, PetL, PetM and PetN. The complex functions as a dimer. Heme serves as cofactor.

Its subcellular location is the plastid. It localises to the chloroplast thylakoid membrane. In terms of biological role, component of the cytochrome b6-f complex, which mediates electron transfer between photosystem II (PSII) and photosystem I (PSI), cyclic electron flow around PSI, and state transitions. This Aethionema grandiflorum (Persian stone-cress) protein is Cytochrome f.